We begin with the raw amino-acid sequence, 1591 residues long: GATOR1 complex protein DEPDC5 (1591 aa).

Disordered stretches follow at residues 427 to 455, 478 to 532, and 695 to 720; these read GKKSASEKTKNGRDTSLGTPKESENTLPI, LATC…STNI, and LSNSSTGVNPRTQNKDSLEDSVSTSP. Basic and acidic residues predominate over residues 430–439; the sequence is SASEKTKNGR. Low complexity predominate over residues 494-508; the sequence is SASSCDVSSSPSLPS. Phosphoserine is present on S505. Residues 518–532 are compositionally biased toward polar residues; sequence SQASDDSSLGKSTNI. At S992 the chain carries Phosphoserine. Disordered stretches follow at residues 1040–1064 and 1118–1153; these read SQKSLGEQQTTVHGKSSTQPAENSS and STGQPMDRGNNQTFGNSQNIEQAFPSANSGDYSSQQ. The span at 1118–1149 shows a compositional bias: polar residues; the sequence is STGQPMDRGNNQTFGNSQNIEQAFPSANSGDY. The region spanning 1175-1250 is the DEP domain; that stretch reads PSTGVQLLSE…YGFYFYKIVM (76 aa). S1518 is modified (phosphoserine).

Belongs to the IML1 family. As to quaternary structure, within the GATOR complex, component of the GATOR1 subcomplex, made of DEPDC5, NPRL2 and NPRL3. GATOR1 mediates the strong interaction of the GATOR complex with small GTPases Rag (RagA/RRAGA, RagB/RRAGB, RagC/RRAGC and/or RagD/RRAGD) heterodimers. GATOR1 interacts with GPR155/LYCHOS; interaction takes place in presence of cholesterol and prevents interaction between GATOR1 and KICSTOR. Interacts with SAMTOR; interaction is direct and takes place in presence of methionine, leading to inhibit the activity of the GATOR1 complex. Post-translationally, phosphorylation at Ser-992 and Ser-1518 by AKT1 and PIM1 inhibit the activity of DEPDC5, releasing inhibition of the mTORC1 pathway. In terms of processing, ubiquitinated. Amino acid-induced 'Lys-48'-linked polyubiquitination of DEPDC5 by the BCR(KLHL22) ubiquitin ligase complex leads to DEPDC5 proteasomal degradation and inhibition of the GATOR1 complex. Ubiquitination may occur at multiple lysines. In terms of tissue distribution, expressed at low levels in all brain regions. Expressed throughout brain development, including in midgestation embryonic head (11.5 dpc), neonatal brain and whole adult brain. Present in neurons and absent in non-neuronal cells, including astrocytes (at protein level).

It localises to the lysosome membrane. Its subcellular location is the cytoplasm. The protein localises to the cytosol. It is found in the perinuclear region. As a component of the GATOR1 complex functions as an inhibitor of the amino acid-sensing branch of the mTORC1 pathway. In response to amino acid depletion, the GATOR1 complex has GTPase activating protein (GAP) activity and strongly increases GTP hydrolysis by RagA/RRAGA (or RagB/RRAGB) within heterodimeric Rag complexes, thereby turning them into their inactive GDP-bound form, releasing mTORC1 from lysosomal surface and inhibiting mTORC1 signaling. In the presence of abundant amino acids, the GATOR1 complex is negatively regulated by GATOR2, the other GATOR subcomplex, in this amino acid-sensing branch of the TORC1 pathway. Within the GATOR1 complex, DEPDC5 mediates direct interaction with the nucleotide-binding pocket of small GTPases Rag (RagA/RRAGA, RagB/RRAGB, RagC/RRAGC and/or RagD/RRAGD) and coordinates their nucleotide loading states by promoting RagA/RRAGA or RagB/RRAGB into their GDP-binding state and RagC/RRAGC or RagD/RRAGD into their GTP-binding state. However, it does not execute the GAP activity, which is mediated by NPRL2. The sequence is that of GATOR1 complex protein DEPDC5 from Mus musculus (Mouse).